We begin with the raw amino-acid sequence, 214 residues long: EEF1A lysine methyltransferase 1 (214 aa).

The residue at position 2 (S2) is an N-acetylserine. The residue at position 2 (S2) is a Phosphoserine.

It belongs to the class I-like SAM-binding methyltransferase superfamily. EFM5 family.

It localises to the cytoplasm. It catalyses the reaction L-lysyl-[protein] + 3 S-adenosyl-L-methionine = N(6),N(6),N(6)-trimethyl-L-lysyl-[protein] + 3 S-adenosyl-L-homocysteine + 3 H(+). Its function is as follows. Protein N-lysine methyltransferase that selectively catalyzes the trimethylation of EEF1A at 'Lys-79'. This Homo sapiens (Human) protein is EEF1A lysine methyltransferase 1.